The primary structure comprises 29 residues: Toxin TdII-3 (29 aa).

In terms of domain architecture, LCN-type CS-alpha/beta spans 1–29 (KDGYLVGTDGCKYGCFTRPGHFCANEECL).

This sequence belongs to the long (4 C-C) scorpion toxin superfamily. Sodium channel inhibitor family. Beta subfamily. As to expression, expressed by the venom gland.

Its subcellular location is the secreted. Functionally, binds voltage-independently to sodium channels (Nav) and shifts the voltage of activation toward more negative potentials. This toxin is active against mammals and also affects neuromuscular preparations of frog. The chain is Toxin TdII-3 from Tityus discrepans (Venezuelan scorpion).